The following is a 532-amino-acid chain: 56 kDa type-specific antigen (532 aa).

A signal peptide spans 1–22; sequence MKKIMLIASAMSALSLPFSASA. Residues 67–87 traverse the membrane as a helical segment; it reads TNGLPFGGTLAAGMTIAPGFR. Residues 401 to 428 are disordered; the sequence is QEEDAKNQGEGDCKQQQGTSEKSKKGKD. Positions 403 to 413 are enriched in basic and acidic residues; sequence EDAKNQGEGDC. Residues 480-500 form a helical membrane-spanning segment; sequence TGMVASGALGVAINAAEGVYV.

It localises to the cell membrane. Its function is as follows. May be an adherent factor for rickettsial adsorption to the host-cell surface and a determinant of virulence of individual rickettsial strain. It is the major outer membrane protein. This chain is 56 kDa type-specific antigen, found in Orientia tsutsugamushi (Rickettsia tsutsugamushi).